The following is an 85-amino-acid chain: High affinity immunoglobulin epsilon receptor subunit gamma (85 aa).

The first 18 residues, 1 to 18, serve as a signal peptide directing secretion; that stretch reads MIPAVVLLLLLLVEQAAA. Residues 19–23 lie on the Extracellular side of the membrane; the sequence is LGEPQ. The chain crosses the membrane as a helical span at residues 24 to 44; that stretch reads LCYILDAILFLYGIVLTLLYC. Topologically, residues 45-85 are cytoplasmic; that stretch reads RLKLQVRKAATASEKSDGIYTGLSTRTQETYETLKHEKPPQ. The 29-residue stretch at 53-81 folds into the ITAM domain; it reads AATASEKSDGIYTGLSTRTQETYETLKHE. Position 64 is a phosphotyrosine (Tyr-64). Ser-68 bears the Phosphoserine mark. Tyr-75 carries the phosphotyrosine modification. Position 77 is a phosphothreonine (Thr-77).

The protein belongs to the CD3Z/FCER1G family. As to quaternary structure, igE Fc receptor is a tetramer of an alpha chain, a beta chain, and two disulfide linked gamma chains. Associates with FCGR1A; forms a functional signaling complex. The signaling subunit of immunoglobulin gamma (IgG) Fc receptor complex. As a homodimer or a heterodimer of CD247 and FCER1G, associates with the ligand binding subunit FCGR3A to form a functional receptor complex. Associates with CLEC6A. Interacts with CLEC4E. Interacts (via ITAM domain) with SYK (via SH2 domains); activates SYK, enabling integrin-mediated activation of neutrophils and macrophages. Interacts with CSF2RB and recruits SYK in response to IL3 stimulation; this interaction is direct. Interacts with CD300LH; the interaction may be indirect. Interacts with CD300LD. Interacts with TARM1.

The protein resides in the cell membrane. Functionally, adapter protein containing an immunoreceptor tyrosine-based activation motif (ITAM) that transduces activation signals from various immunoreceptors. As a component of the high-affinity immunoglobulin E (IgE) receptor, mediates allergic inflammatory signaling in mast cells. As a constitutive component of interleukin-3 receptor complex, selectively mediates interleukin 4/IL4 production by basophils priming T-cells toward effector T-helper 2 subset. Associates with pattern recognition receptors CLEC4D and CLEC4E to form a functional signaling complex in myeloid cells. Binding of mycobacterial trehalose 6,6'-dimycolate (TDM) to this receptor complex leads to phosphorylation of ITAM, triggering activation of SYK, CARD9 and NF-kappa-B, consequently driving maturation of antigen-presenting cells and shaping antigen-specific priming of T-cells toward effector T-helper 1 and T-helper 17 cell subtypes. May function cooperatively with other activating receptors. Functionally linked to integrin beta-2/ITGB2-mediated neutrophil activation. Also involved in integrin alpha-2/ITGA2-mediated platelet activation. This Bos taurus (Bovine) protein is High affinity immunoglobulin epsilon receptor subunit gamma (FCER1G).